Here is a 1046-residue protein sequence, read N- to C-terminus: FERM, ARHGEF and pleckstrin domain-containing protein 1 (1046 aa).

The FERM domain occupies Ile40–Glu320. Residues Leu374 to Ser522 form a disordered region. Over residues Lys413–Gln424 the composition is skewed to basic and acidic residues. The span at Arg458–Leu513 shows a compositional bias: polar residues. The DH domain maps to Lys541–Asn732. In terms of domain architecture, PH 1 spans Glu761 to Asp858. The interval Ser864–His907 is disordered. The segment covering Thr884–Leu894 has biased composition (acidic residues). One can recognise a PH 2 domain in the interval Glu933–Ser1030.

In terms of assembly, interacts with PLXNA4. As to expression, detected in lateral motor column motor neurons and in preganglionic autonomic motor neurons of the column of Terni in the embryonic spinal cord (at protein level).

The protein resides in the cell membrane. It localises to the synapse. Its subcellular location is the synaptosome. It is found in the cytoplasm. The protein localises to the cytosol. The protein resides in the cell projection. It localises to the filopodium. Its subcellular location is the dendrite. It is found in the dendritic spine. Functionally, functions as a guanine nucleotide exchange factor for RAC1. Plays a role in semaphorin signaling via its interaction with PLXNA4. Plays a role in the assembly and disassembly of dendritic filopodia, the formation of dendritic spines, regulation of dendrite length and ultimately the formation of synapses. This Gallus gallus (Chicken) protein is FERM, ARHGEF and pleckstrin domain-containing protein 1 (FARP1).